Here is a 131-residue protein sequence, read N- to C-terminus: Jacalin-related lectin 15 (131 aa).

The region spanning 1–126 (MSTPSGSNPL…LTSLGAYFAP (126 aa)) is the Jacalin-type lectin domain.

This sequence belongs to the jacalin lectin family. As to expression, expressed in the vascular and surrounding tissues in cotyledons. Detected in root apical meristems.

This Arabidopsis thaliana (Mouse-ear cress) protein is Jacalin-related lectin 15 (JAL15).